The chain runs to 305 residues: UDP-3-O-acyl-N-acetylglucosamine deacetylase (305 aa).

Residues His-79, His-238, and Asp-242 each coordinate Zn(2+). His-265 serves as the catalytic Proton donor.

This sequence belongs to the LpxC family. Requires Zn(2+) as cofactor.

It carries out the reaction a UDP-3-O-[(3R)-3-hydroxyacyl]-N-acetyl-alpha-D-glucosamine + H2O = a UDP-3-O-[(3R)-3-hydroxyacyl]-alpha-D-glucosamine + acetate. The protein operates within glycolipid biosynthesis; lipid IV(A) biosynthesis; lipid IV(A) from (3R)-3-hydroxytetradecanoyl-[acyl-carrier-protein] and UDP-N-acetyl-alpha-D-glucosamine: step 2/6. Its function is as follows. Catalyzes the hydrolysis of UDP-3-O-myristoyl-N-acetylglucosamine to form UDP-3-O-myristoylglucosamine and acetate, the committed step in lipid A biosynthesis. The protein is UDP-3-O-acyl-N-acetylglucosamine deacetylase of Vibrio parahaemolyticus serotype O3:K6 (strain RIMD 2210633).